The chain runs to 117 residues: Small ribosomal subunit protein uS17 (117 aa).

This sequence belongs to the universal ribosomal protein uS17 family. In terms of assembly, part of the 30S ribosomal subunit.

In terms of biological role, one of the primary rRNA binding proteins, it binds specifically to the 5'-end of 16S ribosomal RNA. The chain is Small ribosomal subunit protein uS17 from Methanocaldococcus jannaschii (strain ATCC 43067 / DSM 2661 / JAL-1 / JCM 10045 / NBRC 100440) (Methanococcus jannaschii).